We begin with the raw amino-acid sequence, 245 residues long: Uridylate kinase (245 aa).

Lys-12 to Gly-15 contacts ATP. Residue Gly-55 participates in UMP binding. ATP-binding residues include Gly-56 and Arg-60. Residues Asp-76 and Ala-137–Thr-144 each bind UMP. 3 residues coordinate ATP: Thr-164, Tyr-171, and Asp-174.

It belongs to the UMP kinase family. In terms of assembly, homohexamer.

Its subcellular location is the cytoplasm. It carries out the reaction UMP + ATP = UDP + ADP. It functions in the pathway pyrimidine metabolism; CTP biosynthesis via de novo pathway; UDP from UMP (UMPK route): step 1/1. Its activity is regulated as follows. Inhibited by UTP. Its function is as follows. Catalyzes the reversible phosphorylation of UMP to UDP. This is Uridylate kinase from Chlamydia trachomatis serovar A (strain ATCC VR-571B / DSM 19440 / HAR-13).